A 189-amino-acid chain; its full sequence is Urease accessory protein UreF (189 aa).

This sequence belongs to the UreF family. In terms of assembly, ureD, UreF and UreG form a complex that acts as a GTP-hydrolysis-dependent molecular chaperone, activating the urease apoprotein by helping to assemble the nickel containing metallocenter of UreC. The UreE protein probably delivers the nickel.

The protein resides in the cytoplasm. In terms of biological role, required for maturation of urease via the functional incorporation of the urease nickel metallocenter. In Staphylococcus xylosus, this protein is Urease accessory protein UreF.